A 341-amino-acid polypeptide reads, in one-letter code: tRNA N6-adenosine threonylcarbamoyltransferase (341 aa).

Residues H111 and H115 each contribute to the Fe cation site. Residues 134 to 138 (LVSGG), D167, G180, and N272 each bind substrate. D300 serves as a coordination point for Fe cation.

This sequence belongs to the KAE1 / TsaD family. Fe(2+) is required as a cofactor.

It localises to the cytoplasm. It carries out the reaction L-threonylcarbamoyladenylate + adenosine(37) in tRNA = N(6)-L-threonylcarbamoyladenosine(37) in tRNA + AMP + H(+). In terms of biological role, required for the formation of a threonylcarbamoyl group on adenosine at position 37 (t(6)A37) in tRNAs that read codons beginning with adenine. Is involved in the transfer of the threonylcarbamoyl moiety of threonylcarbamoyl-AMP (TC-AMP) to the N6 group of A37, together with TsaE and TsaB. TsaD likely plays a direct catalytic role in this reaction. This chain is tRNA N6-adenosine threonylcarbamoyltransferase, found in Blochmanniella pennsylvanica (strain BPEN).